The chain runs to 312 residues: Glyoxylate/hydroxypyruvate reductase A (312 aa).

Arg227 is an active-site residue. His275 functions as the Proton donor in the catalytic mechanism.

Belongs to the D-isomer specific 2-hydroxyacid dehydrogenase family. GhrA subfamily.

The protein resides in the cytoplasm. It carries out the reaction glycolate + NADP(+) = glyoxylate + NADPH + H(+). The catalysed reaction is (R)-glycerate + NAD(+) = 3-hydroxypyruvate + NADH + H(+). The enzyme catalyses (R)-glycerate + NADP(+) = 3-hydroxypyruvate + NADPH + H(+). Its function is as follows. Catalyzes the NADPH-dependent reduction of glyoxylate and hydroxypyruvate into glycolate and glycerate, respectively. This chain is Glyoxylate/hydroxypyruvate reductase A, found in Enterobacter sp. (strain 638).